A 233-amino-acid polypeptide reads, in one-letter code: Glucosamine-6-phosphate deaminase (233 aa).

D62 acts as the Proton acceptor; for enolization step in catalysis. N128 functions as the For ring-opening step in the catalytic mechanism. H130 acts as the Proton acceptor; for ring-opening step in catalysis. E135 acts as the For ring-opening step in catalysis.

Belongs to the glucosamine/galactosamine-6-phosphate isomerase family. NagB subfamily.

The enzyme catalyses alpha-D-glucosamine 6-phosphate + H2O = beta-D-fructose 6-phosphate + NH4(+). Its pathway is amino-sugar metabolism; N-acetylneuraminate degradation; D-fructose 6-phosphate from N-acetylneuraminate: step 5/5. Its function is as follows. Catalyzes the reversible isomerization-deamination of glucosamine 6-phosphate (GlcN6P) to form fructose 6-phosphate (Fru6P) and ammonium ion. The sequence is that of Glucosamine-6-phosphate deaminase from Enterococcus faecalis (strain ATCC 700802 / V583).